A 956-amino-acid polypeptide reads, in one-letter code: Replication factor C subunit 1 (956 aa).

Composition is skewed to basic and acidic residues over residues methionine 1–glycine 15 and threonine 50–glutamate 74. Disordered stretches follow at residues methionine 1 to cysteine 206 and lysine 286 to lysine 332. Over residues arginine 158–methionine 183 the composition is skewed to gly residues. Basic and acidic residues-rich tracts occupy residues glycine 186–proline 200 and serine 288–glutamate 298. Positions glycine 202–arginine 292 constitute a BRCT domain. Serine 399–lysine 406 lines the ATP pocket. Positions leucine 858–arginine 956 are disordered. Positions arginine 866–threonine 892 are enriched in acidic residues. Positions lysine 916–lysine 925 are enriched in low complexity.

The protein belongs to the activator 1 large subunit family. As to quaternary structure, heterotetramer of subunits RFC2, RFC3, RFC4 and RFC5 that can form a complex with RFC1. As to expression, expressed at high levels in flowers and siliques, and at lower levels in roots, stems and leaves.

Its subcellular location is the nucleus. Its function is as follows. Plays a role as mediator of transcriptional gene silencing (TGS), DNA replication, DNA repair, hypersensitive response (HR) and telomere length regulation. Is required in meiosis for DNA double-strand break (DSB) repair during meiotic homologous recombination. May participate in the RAD51-mediated recombination intermediate repair process. Is important for lagging strand synthesis. Promotes meiotic recombination via a specific pathway for crossovers (COs) that involves the formation of double Holliday Junction (dHJ) intermediates. This is Replication factor C subunit 1 (RFC1) from Arabidopsis thaliana (Mouse-ear cress).